The primary structure comprises 486 residues: UDP-N-acetylmuramate--L-alanine ligase (486 aa).

126–132 (GTHGKTS) contacts ATP.

The protein belongs to the MurCDEF family.

Its subcellular location is the cytoplasm. The catalysed reaction is UDP-N-acetyl-alpha-D-muramate + L-alanine + ATP = UDP-N-acetyl-alpha-D-muramoyl-L-alanine + ADP + phosphate + H(+). It functions in the pathway cell wall biogenesis; peptidoglycan biosynthesis. In terms of biological role, cell wall formation. The protein is UDP-N-acetylmuramate--L-alanine ligase of Corynebacterium glutamicum (strain ATCC 13032 / DSM 20300 / JCM 1318 / BCRC 11384 / CCUG 27702 / LMG 3730 / NBRC 12168 / NCIMB 10025 / NRRL B-2784 / 534).